The primary structure comprises 500 residues: Envelop protein OPG153 (500 aa).

A disulfide bridge connects residues C43 and C342.

Belongs to the orthopoxvirus OPG153 protein family. In terms of assembly, interacts with proteins OPG094 and OPG143. Interacts with OPG154. Interacts with OPG152. Interacts with host laminin.

It localises to the virion membrane. Its function is as follows. Envelop protein that mediates acid-dependent endocytosis into host cells. Plays an important role in endocytic entry of the virus by acting as an acid-sensitive membrane fusion suppressor. Low pH in host endosomes triggers conformational changes to allow de-repression of viral fusion complex activity and membrane fusion within vesicles. Also plays a role in bridging the mature virion with structural protein OPG152. The sequence is that of Envelop protein OPG153 (OPG153) from Vaccinia virus (strain Western Reserve) (VACV).